Consider the following 91-residue polypeptide: Small ribosomal subunit protein uS19 (91 aa).

This sequence belongs to the universal ribosomal protein uS19 family.

Protein S19 forms a complex with S13 that binds strongly to the 16S ribosomal RNA. This chain is Small ribosomal subunit protein uS19, found in Parasynechococcus marenigrum (strain WH8102).